A 1222-amino-acid chain; its full sequence is MLFNINEKGEPLVISFAPFLSPEAIKHLQENERCSDQSQKRTAQQIEAIYTSGQNILVSASAGSGKTFVMVERILDKILRGVSIDRLFISTFTVKAATELRERIENKLYSQIAQTTDFQMKVYLTEQLQSLGQADIGTMDAFAQKVVSRYGYSIGISSQFRIMQDKAEQDVLKQEVFSKLFSEFMNQKEAPVFRALVKNFSGNCKDTSAFRELVYTCYSFSQSTENPKIWLQENFLSAAKTYQRLEDIPDHDIELLLLAMQDTANQLRDVTDMEDYGQLTKAGSRSAKYTKHLTIIEKLSDWVRDFKCLYGKAGLDRLIRDVTGLIPSGNDVTVSKVKYPVFKTLHQKLKQFRHLETILMYQKDCFPLLEQLQDFVLAFSEAYLAVKIQESAFEFSDITHFAIKILEENTDIRQSYQQHYHEVMVDEYQDNNHMQERLLTLLSNGHNRFMVGDIKQSIYRFRQADPQIFNQKFRDYQKKPEQGKVILLKENFRSQSEVLNVSNAVFSHLMDESVGDVLYDEQHQLIAGSHAQTVPYLDRRAQLLLYNSDKDDGNAPSDSEGISFSEVTIVAKEIIKLHNDKGVPFEDITLLVSSRTRNDIISHTFNQYSIPIVTDGGQQNYLKSVEVMVMLDTLRTINNPRNDYALVALLRSPMFAFDEDDLARIALQKDNELDKDCLYDKIQRAVIGRGAHPELIHDTLLGKLNIFLKTLKSWRRYAKLGSLYDLIWKIFNDRFYFDFVASQAKAEQAQANLYALALRANQFEKSGYKGLYRFIKMIDKVLETQNDLADVEVAAPKQAVNLMTIHKSKGLQFPYVFILNCDKRFSMTDIHKSFILNRQHGIGIKYLADIKGLLGETTLNSVKVSMETLPYQLNKQELRLATLSEQMRLLYVAMTRAEKKVYFIGKASKSKSQDITDPKKLGKLLPLALREQLLTFQDWLLAIADIFSTEDLYFDVRFIEDSDLTQESVGRLQTPQLLNPDDLKDNRQSETIARALDMLEAVSQLNANYEAAIHLPTVRTPSQLKAAYEPLLEPIGVDIIEKSSRSLSDFTLPHFSKKVKVEASHIGSALHQLMQVLPLSKPINQQTLLDALREIDSNEEVKTALDLKKIESFFCDTSLGQFFQTYQKHLYREAPFAILKVDPISQEEYVLRGIIDAYFLFDDHIVLVDYKTDKYKQPIELKKRYQQQLELYAEALTQTYKLPVTKRYLVLMGGGKPEIVEV.

Residues 39-495 (QKRTAQQIEA…ILLKENFRSQ (457 aa)) form the UvrD-like helicase ATP-binding domain. 60-67 (ASAGSGKT) serves as a coordination point for ATP. Residues 524–810 (QLIAGSHAQT…NLMTIHKSKG (287 aa)) enclose the UvrD-like helicase C-terminal domain.

The protein belongs to the helicase family. AddA subfamily. Heterodimer of AddA and AddB/RexB. Mg(2+) serves as cofactor.

The enzyme catalyses Couples ATP hydrolysis with the unwinding of duplex DNA by translocating in the 3'-5' direction.. It catalyses the reaction ATP + H2O = ADP + phosphate + H(+). Functionally, the heterodimer acts as both an ATP-dependent DNA helicase and an ATP-dependent, dual-direction single-stranded exonuclease. Recognizes the chi site generating a DNA molecule suitable for the initiation of homologous recombination. The AddA nuclease domain is required for chi fragment generation; this subunit has the helicase and 3' -&gt; 5' nuclease activities. This Streptococcus pyogenes serotype M28 (strain MGAS6180) protein is ATP-dependent helicase/nuclease subunit A.